We begin with the raw amino-acid sequence, 268 residues long: uncharacterized protein (268 aa).

This is an uncharacterized protein from Metamycoplasma hominis (strain ATCC 23114 / DSM 25592 / NBRC 14850 / NCTC 10111 / PG21) (Mycoplasma hominis).